Reading from the N-terminus, the 125-residue chain is Photoactive yellow protein (125 aa).

Residues 23–86 (IDDLAFGAIQ…GRFREGVANG (64 aa)) enclose the PAS domain. Cys69 carries the post-translational modification S-(4-hydroxycinnamyl)cysteine.

This sequence belongs to the photoactive yellow protein family. Post-translationally, the 4-hydroxycinnamic acid (p-coumaric acid) chromophore is covalently bound via a thioester linkage.

This photoactive protein is a photoreceptor with kinetics similar to that of rhodopsin. The protein is Photoactive yellow protein (pyp) of Rhodothalassium salexigens (Rhodospirillum salexigens).